The chain runs to 325 residues: Beta-ketoacyl-[acyl-carrier-protein] synthase III (325 aa).

Active-site residues include Cys-119 and His-252. The interval 253-257 is ACP-binding; sequence QANLR. Residue Asn-282 is part of the active site.

Belongs to the thiolase-like superfamily. FabH family. As to quaternary structure, homodimer.

Its subcellular location is the cytoplasm. It catalyses the reaction malonyl-[ACP] + acetyl-CoA + H(+) = 3-oxobutanoyl-[ACP] + CO2 + CoA. The protein operates within lipid metabolism; fatty acid biosynthesis. Its function is as follows. Catalyzes the condensation reaction of fatty acid synthesis by the addition to an acyl acceptor of two carbons from malonyl-ACP. Catalyzes the first condensation reaction which initiates fatty acid synthesis and may therefore play a role in governing the total rate of fatty acid production. Possesses both acetoacetyl-ACP synthase and acetyl transacylase activities. Its substrate specificity determines the biosynthesis of branched-chain and/or straight-chain of fatty acids. The chain is Beta-ketoacyl-[acyl-carrier-protein] synthase III from Polaromonas naphthalenivorans (strain CJ2).